Here is a 351-residue protein sequence, read N- to C-terminus: MALPFQKGLEKYKNIDEDELLGKLSEEELKQLENVLDDLDPESATLPAGFRQKDQTQKAATGPFDREHLLMYLEKEALEQKDREDFVPFTGEKKGRVFIPKEKPVETRKEEKVTLDPELEEALASASDTELYDLAAVLGVHNLLNNPKFDEETTNGEGRKGPVRNVVKGEKAKPVFEEPPNPTNVEASLQQMKANDPSLQEVNLNNIKNIPIPTLKEFAKSLETNTHVKKFSLAATRSNDPVALAFAEMLKVNKTLKSLNVESNFITGTGILALVEALRENDTLTEIKIDNQRQQLGTAVEMEIAQMLEENSRILKFGYQFTKQGPRTRVAAAITKNNDLVRKKRVEGDRR.

S25 is modified (phosphoserine).

It belongs to the tropomodulin family. Binds to the N-terminus of tropomyosin and to actin. Neuronal-tissue specific.

The protein resides in the cytoplasm. The protein localises to the cytoskeleton. Its function is as follows. Blocks the elongation and depolymerization of the actin filaments at the pointed end. The Tmod/TM complex contributes to the formation of the short actin protofilament, which in turn defines the geometry of the membrane skeleton. The sequence is that of Tropomodulin-2 (Tmod2) from Mus musculus (Mouse).